We begin with the raw amino-acid sequence, 357 residues long: 4-hydroxy-2-oxovalerate aldolase (357 aa).

The segment at Met-1–Thr-21 is disordered. The 251-residue stretch at Val-15 to Leu-265 folds into the Pyruvate carboxyltransferase domain. Substrate is bound at residue Arg-23–Asp-24. Asp-24 is a Mn(2+) binding site. His-27 functions as the Proton acceptor in the catalytic mechanism. Positions 177 and 204 each coordinate substrate. Positions 204 and 206 each coordinate Mn(2+).

It belongs to the 4-hydroxy-2-oxovalerate aldolase family.

The catalysed reaction is (S)-4-hydroxy-2-oxopentanoate = acetaldehyde + pyruvate. Functionally, involved in the biosynthesis of the peptidyl nucleoside antibiotic nikkomycin. The polypeptide is 4-hydroxy-2-oxovalerate aldolase (Streptomyces tendae).